Here is a 521-residue protein sequence, read N- to C-terminus: Bifunctional purine biosynthesis protein PurH (521 aa).

The 145-residue stretch at 1-145 folds into the MGS-like domain; the sequence is MIKQALISVS…KNHRDVTVVV (145 aa).

The protein belongs to the PurH family.

The catalysed reaction is (6R)-10-formyltetrahydrofolate + 5-amino-1-(5-phospho-beta-D-ribosyl)imidazole-4-carboxamide = 5-formamido-1-(5-phospho-D-ribosyl)imidazole-4-carboxamide + (6S)-5,6,7,8-tetrahydrofolate. It carries out the reaction IMP + H2O = 5-formamido-1-(5-phospho-D-ribosyl)imidazole-4-carboxamide. Its pathway is purine metabolism; IMP biosynthesis via de novo pathway; 5-formamido-1-(5-phospho-D-ribosyl)imidazole-4-carboxamide from 5-amino-1-(5-phospho-D-ribosyl)imidazole-4-carboxamide (10-formyl THF route): step 1/1. The protein operates within purine metabolism; IMP biosynthesis via de novo pathway; IMP from 5-formamido-1-(5-phospho-D-ribosyl)imidazole-4-carboxamide: step 1/1. This Burkholderia cenocepacia (strain ATCC BAA-245 / DSM 16553 / LMG 16656 / NCTC 13227 / J2315 / CF5610) (Burkholderia cepacia (strain J2315)) protein is Bifunctional purine biosynthesis protein PurH.